A 281-amino-acid polypeptide reads, in one-letter code: Aspartate/glutamate leucyltransferase (281 aa).

The protein belongs to the R-transferase family. Bpt subfamily.

The protein localises to the cytoplasm. It catalyses the reaction N-terminal L-glutamyl-[protein] + L-leucyl-tRNA(Leu) = N-terminal L-leucyl-L-glutamyl-[protein] + tRNA(Leu) + H(+). It carries out the reaction N-terminal L-aspartyl-[protein] + L-leucyl-tRNA(Leu) = N-terminal L-leucyl-L-aspartyl-[protein] + tRNA(Leu) + H(+). Functions in the N-end rule pathway of protein degradation where it conjugates Leu from its aminoacyl-tRNA to the N-termini of proteins containing an N-terminal aspartate or glutamate. This Paracoccus denitrificans (strain Pd 1222) protein is Aspartate/glutamate leucyltransferase.